The primary structure comprises 216 residues: Uracil phosphoribosyltransferase (216 aa).

30–34 contacts GTP; the sequence is KTLVR. Residues Arg-80, Arg-105, and 140–148 each bind 5-phospho-alpha-D-ribose 1-diphosphate; that span reads DPMIATAST. Uracil contacts are provided by residues Ile-203 and 208 to 210; that span reads GDA. Asp-209 contributes to the 5-phospho-alpha-D-ribose 1-diphosphate binding site.

Belongs to the UPRTase family. Requires Mg(2+) as cofactor.

It catalyses the reaction UMP + diphosphate = 5-phospho-alpha-D-ribose 1-diphosphate + uracil. Its pathway is pyrimidine metabolism; UMP biosynthesis via salvage pathway; UMP from uracil: step 1/1. With respect to regulation, allosterically activated by GTP. Functionally, catalyzes the conversion of uracil and 5-phospho-alpha-D-ribose 1-diphosphate (PRPP) to UMP and diphosphate. The polypeptide is Uracil phosphoribosyltransferase (Sulfurisphaera tokodaii (strain DSM 16993 / JCM 10545 / NBRC 100140 / 7) (Sulfolobus tokodaii)).